We begin with the raw amino-acid sequence, 270 residues long: Phosphonates import ATP-binding protein PhnC 1 (270 aa).

The 244-residue stretch at 2–245 folds into the ABC transporter domain; the sequence is LVVEGLTCRF…IARELYDLEA (244 aa). Position 34–41 (34–41) interacts with ATP; it reads GRSGAGKS.

This sequence belongs to the ABC transporter superfamily. Phosphonates importer (TC 3.A.1.9.1) family. As to quaternary structure, the complex is composed of two ATP-binding proteins (PhnC), two transmembrane proteins (PhnE) and a solute-binding protein (PhnD).

It localises to the cell inner membrane. The catalysed reaction is phosphonate(out) + ATP + H2O = phosphonate(in) + ADP + phosphate + H(+). Part of the ABC transporter complex PhnCDE involved in phosphonates import. Responsible for energy coupling to the transport system. The chain is Phosphonates import ATP-binding protein PhnC 1 from Rhodopseudomonas palustris (strain ATCC BAA-98 / CGA009).